The chain runs to 546 residues: DDB1- and CUL4-associated factor 11 (546 aa).

A compositionally biased stretch (low complexity) spans M1–G19. A disordered region spans residues M1 to V40. At S75 the chain carries Phosphoserine. 7 WD repeats span residues S170 to K210, D216 to D258, E263 to Q302, S305 to P345, G353 to G392, G435 to T480, and N481 to D520. Positions P523 to Q546 are disordered. The span at R537–Q546 shows a compositional bias: polar residues.

As to quaternary structure, interacts with DDB1 and CUL4A.

Its pathway is protein modification; protein ubiquitination. Its function is as follows. May function as a substrate receptor for CUL4-DDB1 E3 ubiquitin-protein ligase complex. The protein is DDB1- and CUL4-associated factor 11 (DCAF11) of Pongo abelii (Sumatran orangutan).